The chain runs to 197 residues: ATP-dependent Clp protease proteolytic subunit (197 aa).

Ser-102 serves as the catalytic Nucleophile. His-127 is an active-site residue.

The protein belongs to the peptidase S14 family. In terms of assembly, fourteen ClpP subunits assemble into 2 heptameric rings which stack back to back to give a disk-like structure with a central cavity, resembling the structure of eukaryotic proteasomes.

The protein localises to the cytoplasm. The catalysed reaction is Hydrolysis of proteins to small peptides in the presence of ATP and magnesium. alpha-casein is the usual test substrate. In the absence of ATP, only oligopeptides shorter than five residues are hydrolyzed (such as succinyl-Leu-Tyr-|-NHMec, and Leu-Tyr-Leu-|-Tyr-Trp, in which cleavage of the -Tyr-|-Leu- and -Tyr-|-Trp bonds also occurs).. Functionally, cleaves peptides in various proteins in a process that requires ATP hydrolysis. Has a chymotrypsin-like activity. Plays a major role in the degradation of misfolded proteins. The protein is ATP-dependent Clp protease proteolytic subunit of Borreliella afzelii (strain PKo) (Borrelia afzelii).